A 154-amino-acid chain; its full sequence is Large ribosomal subunit protein uL16 (154 aa).

It belongs to the universal ribosomal protein uL16 family. In terms of assembly, part of the 50S ribosomal subunit.

Functionally, binds 23S rRNA and is also seen to make contacts with the A and possibly P site tRNAs. This Synechococcus sp. (strain RCC307) protein is Large ribosomal subunit protein uL16.